A 119-amino-acid chain; its full sequence is uncharacterized protein (119 aa).

The signal sequence occupies residues 1-26 (MNKLKRLSMLTVMIASVFIFSSHALA). The 75-residue stretch at 30 to 104 (YTVSTSSGAP…IVPGFVSDTY (75 aa)) folds into the SH3b domain.

The protein to B.subtilis YraJ.

This is an uncharacterized protein from Bacillus subtilis (strain 168).